Reading from the N-terminus, the 382-residue chain is Cytochrome b (382 aa).

4 helical membrane-spanning segments follow: residues 36–56 (FGSL…FLTM), 80–101 (WLIR…YLHI), 116–136 (WFIG…GYVL), and 181–201 (FYTF…IHLL). Positions 86 and 100 each coordinate heme b. The heme b site is built by His185 and His199. Residue His204 coordinates a ubiquinone. A run of 4 helical transmembrane segments spans residues 229–249 (YKDL…TLSN), 291–311 (LGGV…PLTF), 323–343 (INQF…WIGA), and 350–370 (YIIT…LNPL).

The protein belongs to the cytochrome b family. In terms of assembly, the main subunits of complex b-c1 are: cytochrome b, cytochrome c1 and the Rieske protein. It depends on heme b as a cofactor.

It is found in the mitochondrion inner membrane. In terms of biological role, component of the ubiquinol-cytochrome c reductase complex (complex III or cytochrome b-c1 complex) that is part of the mitochondrial respiratory chain. The b-c1 complex mediates electron transfer from ubiquinol to cytochrome c. Contributes to the generation of a proton gradient across the mitochondrial membrane that is then used for ATP synthesis. This Samia ricini (Indian eri silkmoth) protein is Cytochrome b (MT-CYB).